A 717-amino-acid chain; its full sequence is Serine/threonine-protein kinase STE11 (717 aa).

An SAM domain is found at 20–84 (NDLPFVQLFL…LRKSKSFQRD (65 aa)). Serine 323 is subject to Phosphoserine. Residues 415–712 (WLKGACIGSG…ALELLQHPWL (298 aa)) enclose the Protein kinase domain. ATP contacts are provided by residues 421-429 (IGSGSFGSV) and lysine 444. The segment covering 452-466 (NIGVPTDNNKQANSD) has biased composition (polar residues). The interval 452–481 (NIGVPTDNNKQANSDENNEQEEQQEKIEDV) is disordered. Residue serine 465 is modified to Phosphoserine. Aspartate 579 serves as the catalytic Proton acceptor.

Belongs to the protein kinase superfamily. STE Ser/Thr protein kinase family. MAP kinase kinase kinase subfamily. Homodimer. Interacts (via SAM domain) with STE50 (via SAM domain). Interacts with PBS2 and SHO1.

It carries out the reaction L-seryl-[protein] + ATP = O-phospho-L-seryl-[protein] + ADP + H(+). The catalysed reaction is L-threonyl-[protein] + ATP = O-phospho-L-threonyl-[protein] + ADP + H(+). Its function is as follows. Serine/threonine protein kinase required for cell-type-specific transcription and signal transduction in yeast. It is thought that it phosphorylates the STE7 protein kinase which itself, phosphorylates the FUS3 and or KSS1 kinases. This Saccharomyces cerevisiae (strain ATCC 204508 / S288c) (Baker's yeast) protein is Serine/threonine-protein kinase STE11 (STE11).